The primary structure comprises 392 residues: Tryptophan 2,3-dioxygenase (392 aa).

Substrate is bound by residues 57–61 (FIVTH) and R128. H313 lines the heme pocket. Residue T328 coordinates substrate.

It belongs to the tryptophan 2,3-dioxygenase family. Homotetramer. Dimer of dimers. The cofactor is heme.

It carries out the reaction L-tryptophan + O2 = N-formyl-L-kynurenine. It functions in the pathway amino-acid degradation; L-tryptophan degradation via kynurenine pathway; L-kynurenine from L-tryptophan: step 1/2. It participates in pigment biosynthesis; ommochrome biosynthesis. Heme-dependent dioxygenase that catalyzes the oxidative cleavage of the L-tryptophan (L-Trp) pyrrole ring and converts L-tryptophan to N-formyl-L-kynurenine. Catalyzes the oxidative cleavage of the indole moiety. The sequence is that of Tryptophan 2,3-dioxygenase from Anopheles gambiae (African malaria mosquito).